The following is a 538-amino-acid chain: CWF19-like protein 1 (538 aa).

Disordered regions lie at residues 259–278 and 298–324; these read PDVT…TGKQ and QGRK…PPQP.

Belongs to the CWF19 family.

In Pongo abelii (Sumatran orangutan), this protein is CWF19-like protein 1 (CWF19L1).